The primary structure comprises 336 residues: Ketoreductase adrE (336 aa).

Tyrosine 171 is a binding site for NADP(+).

This sequence belongs to the NAD(P)-dependent epimerase/dehydratase family. Dihydroflavonol-4-reductase subfamily.

It functions in the pathway secondary metabolite biosynthesis; terpenoid biosynthesis. Its function is as follows. Ketoreductase; part of the gene cluster that mediates the biosynthesis of andrastins, meroterpenoid compounds that exhibit inhibitory activity against ras farnesyltransferase, suggesting that they could be promising leads for antitumor agents. The first step of the pathway is the synthesis of 3,5-dimethylorsellinic acid (DMOA) by the polyketide synthase adrD via condensation of one acetyl-CoA starter unit with 3 malonyl-CoA units and 2 methylations. DMAO is then converted to farnesyl-DMAO by the prenyltransferase adrG. The methyltransferase adrK catalyzes the methylation of the carboxyl group of farnesyl-DMAO to farnesyl-DMAO methyl ester which is further converted to epoxyfarnesyl-DMAO methyl ester by the FAD-dependent monooxygenase adrH. The terpene cyclase adrI then catalyzes the carbon skeletal rearrangement to generate the andrastin E, the first compound in the pathway having the andrastin scaffold, with the tetracyclic ring system. The post-cyclization tailoring enzymes adrF, adrE, adrJ, and adrA, are involved in the conversion of andrastin E into andrastin A. The short chain dehydrogenase adrF is responsible for the oxidation of the C-3 a hydroxyl group of andrastin E to yield the corresponding ketone, andrastin D. The ketoreductase adrE stereoselectively reduces the carbonyl moiety to reverse the stereochemistry of the C-3 position to yield andrastin F. The acetyltransferase adrJ is the acetyltransferase that attaches the acetyl group to the C-3 hydroxyl group of andrastin F to yield andrastin C. Finally, the cytochrome P450 monooxygenase adrA catalyzes two sequential oxidation reactions of the C-23 methyl group, to generate the corresponding alcohol andrastin B, and aldehyde andrastin A. The polypeptide is Ketoreductase adrE (Penicillium roqueforti).